Here is a 105-residue protein sequence, read N- to C-terminus: uncharacterized protein (105 aa).

Residues 29 to 49 (NAFLLILSEAYLLFVFLSYLI) form a helical membrane-spanning segment.

The protein localises to the membrane. This is an uncharacterized protein from Saccharomyces cerevisiae (strain ATCC 204508 / S288c) (Baker's yeast).